The sequence spans 221 residues: uncharacterized protein (221 aa).

To E.coli YheO.

This is an uncharacterized protein from Haemophilus influenzae (strain ATCC 51907 / DSM 11121 / KW20 / Rd).